The sequence spans 488 residues: Alpha,alpha-trehalose-phosphate synthase [UDP-forming] 56 kDa subunit (488 aa).

Residues Tyr102 and Asp156 each coordinate D-glucose 6-phosphate. Positions 293 and 298 each coordinate UDP. Arg293 and Lys298 together coordinate UDP-alpha-D-glucose. D-glucose 6-phosphate is bound at residue Arg331. UDP-binding positions include Ile370 and Leu396 to Glu400. UDP-alpha-D-glucose contacts are provided by residues Ile370 and Asp392–Glu400.

Belongs to the glycosyltransferase 20 family. Trehalose synthase/phosphatase complex contains three or four polypeptides of 56 kDa (TPS1), 102 kDa (TPS2), 115 kDa (TPS3) and 123 kDa (TSL1).

It catalyses the reaction D-glucose 6-phosphate + UDP-alpha-D-glucose = alpha,alpha-trehalose 6-phosphate + UDP + H(+). Its pathway is carbohydrate biosynthesis. Its function is as follows. Synthase catalytic subunit of the trehalose synthase complex that catalyzes the production of trehalose from glucose-6-phosphate and UDP-alpha-D-glucose in a two step process. Can function independently of the complex. The protein is Alpha,alpha-trehalose-phosphate synthase [UDP-forming] 56 kDa subunit of Kluyveromyces lactis (strain ATCC 8585 / CBS 2359 / DSM 70799 / NBRC 1267 / NRRL Y-1140 / WM37) (Yeast).